A 77-amino-acid chain; its full sequence is U14-theraphotoxin-Cg1a 1 (77 aa).

The N-terminal stretch at 1–21 (MKTSVLLVILGIAAITVQCTA) is a signal peptide. Positions 22-49 (SESVEQDSLRTFVDAVLGWNAEMASEAR) are excised as a propeptide. Intrachain disulfides connect Cys50-Cys64, Cys57-Cys69, and Cys63-Cys75. Lys77 carries the lysine amide modification.

This sequence belongs to the neurotoxin 10 (Hwtx-1) family. 65 (Jztx-21) subfamily. Expressed by the venom gland.

It is found in the secreted. Functionally, probable ion channel inhibitor. The protein is U14-theraphotoxin-Cg1a 1 of Chilobrachys guangxiensis (Chinese earth tiger tarantula).